The primary structure comprises 448 residues: Tryptamine benzoyltransferase 2 (448 aa).

Residues 1-20 (MEITSSAMLKPAPTPTPHPL) form a disordered region. Catalysis depends on proton acceptor residues H155 and D386.

Belongs to the plant acyltransferase family.

Functionally, hydroxycinnamoyl transferase that catalyzes the transfer of an acyl from benzoyl-CoA to tryptamine, to produce benzoyl tryptamine. Serotonin and tyramine serve as acyl acceptors in vitro. Specific for benzoyl-CoA as acyl donor. Has no activity with p-coumaroyl-CoA, caffeoyl-CoA, or feruloyl-CoA as acyl donors. The sequence is that of Tryptamine benzoyltransferase 2 from Oryza sativa subsp. japonica (Rice).